We begin with the raw amino-acid sequence, 106 residues long: Large ribosomal subunit protein uL23 (106 aa).

Belongs to the universal ribosomal protein uL23 family. As to quaternary structure, part of the 50S ribosomal subunit. Contacts protein L29, and trigger factor when it is bound to the ribosome.

Functionally, one of the early assembly proteins it binds 23S rRNA. One of the proteins that surrounds the polypeptide exit tunnel on the outside of the ribosome. Forms the main docking site for trigger factor binding to the ribosome. In Acinetobacter baylyi (strain ATCC 33305 / BD413 / ADP1), this protein is Large ribosomal subunit protein uL23.